The sequence spans 189 residues: MTSFVFVTGNANKLREVKAILAAGDSGIEVTSQSVDVPELQGTTQEIAIAKCKVAAEKLGTACVTEDTALCFEALNGLPGPYIKDFLANIGHEGLNTLLNGFPTTRATALCTFAYSPGPGEEPILFEGRTEGNIVPARGSKVFGWDPIFQPLEGGGRTYAEMDGEEKNKISHRYRALEKLRAYLSEQAK.

Position 8 to 13 (8 to 13 (TGNANK)) interacts with ITP. Residue glutamate 39 participates in Mg(2+) binding. ITP contacts are provided by residues lysine 51, 67-68 (DT), lysine 84, 143-146 (FGWD), lysine 167, and 172-173 (HR).

It belongs to the HAM1 NTPase family. In terms of assembly, homodimer. The cofactor is Mg(2+). Mn(2+) serves as cofactor.

It is found in the cytoplasm. The protein localises to the nucleus. The catalysed reaction is ITP + H2O = IMP + diphosphate + H(+). It carries out the reaction dITP + H2O = dIMP + diphosphate + H(+). The enzyme catalyses XTP + H2O = XMP + diphosphate + H(+). Functionally, pyrophosphatase that hydrolyzes non-canonical purine nucleotides such as inosine triphosphate (ITP), deoxyinosine triphosphate (dITP) or xanthosine 5'-triphosphate (XTP) to their respective monophosphate derivatives. The enzyme does not distinguish between the deoxy- and ribose forms. Probably excludes non-canonical purines from RNA and DNA precursor pools, thus preventing their incorporation into RNA and DNA and avoiding chromosomal lesions. In Cryptococcus neoformans var. neoformans serotype D (strain JEC21 / ATCC MYA-565) (Filobasidiella neoformans), this protein is Inosine triphosphate pyrophosphatase.